The following is a 219-amino-acid chain: uncharacterized protein (219 aa).

The signal sequence occupies residues 1 to 15; sequence MYVLFLLSWVLVAGA. N-linked (GlcNAc...) asparagine glycosylation is present at Asn-118. Residues 138–174 are disordered; sequence GEVGEDPGKRARKRRLGLPIGEPGEDVGKRMRQRQQG.

As to expression, component of the acid-insoluble and acid-soluble organic matrix of calcified layers of the shell (at protein level).

It localises to the secreted. This is an uncharacterized protein from Lottia gigantea (Giant owl limpet).